A 680-amino-acid chain; its full sequence is DNA ligase (680 aa).

NAD(+) contacts are provided by residues 38–42, 87–88, and Glu-119; these read DAEYD and SL. The N6-AMP-lysine intermediate role is filled by Lys-121. Positions 142, 179, 296, and 320 each coordinate NAD(+). Residues Cys-414, Cys-417, Cys-432, and Cys-438 each contribute to the Zn(2+) site. A BRCT domain is found at 597–680; the sequence is IEDLPLKGLT…DLLRKHGRLE (84 aa).

The protein belongs to the NAD-dependent DNA ligase family. LigA subfamily. It depends on Mg(2+) as a cofactor. Mn(2+) serves as cofactor.

It carries out the reaction NAD(+) + (deoxyribonucleotide)n-3'-hydroxyl + 5'-phospho-(deoxyribonucleotide)m = (deoxyribonucleotide)n+m + AMP + beta-nicotinamide D-nucleotide.. Functionally, DNA ligase that catalyzes the formation of phosphodiester linkages between 5'-phosphoryl and 3'-hydroxyl groups in double-stranded DNA using NAD as a coenzyme and as the energy source for the reaction. It is essential for DNA replication and repair of damaged DNA. This Cellvibrio japonicus (strain Ueda107) (Pseudomonas fluorescens subsp. cellulosa) protein is DNA ligase.